Here is a 78-residue protein sequence, read N- to C-terminus: Large ribosomal subunit protein bL28 (78 aa).

Residues 1–25 (MSRVCQVTGKRPAVGNNRSHAKNAT) are disordered.

The protein belongs to the bacterial ribosomal protein bL28 family.

The polypeptide is Large ribosomal subunit protein bL28 (Aliivibrio salmonicida (strain LFI1238) (Vibrio salmonicida (strain LFI1238))).